Consider the following 60-residue polypeptide: MLNTQRAQEIAASPIMANVTYQEVPIYIQHVDEQNETARIYPLDNPELEQDVPLSQLMEH.

It belongs to the SspH family.

The protein localises to the spore core. The polypeptide is Small, acid-soluble spore protein H (Halalkalibacterium halodurans (strain ATCC BAA-125 / DSM 18197 / FERM 7344 / JCM 9153 / C-125) (Bacillus halodurans)).